The sequence spans 207 residues: ADP-ribose pyrophosphatase (207 aa).

Substrate is bound by residues 37-38 (RE) and R64. In terms of domain architecture, Nudix hydrolase spans 41-172 (EHFGAVAIVA…EIVNSIAIAG (132 aa)). A76 is a Mg(2+) binding site. Positions 77-99 (GLLDVAGEPPHLTAARELREEVG) match the Nudix box motif. L78 contacts substrate. Residues E93 and E97 each coordinate Mg(2+). Substrate-binding positions include 114-116 (APG) and E120. Residue E142 coordinates Mg(2+). The active-site Proton acceptor is E142.

The protein belongs to the Nudix hydrolase family. In terms of assembly, homodimer. Requires Mg(2+) as cofactor. The cofactor is Mn(2+).

It carries out the reaction ADP-D-ribose + H2O = D-ribose 5-phosphate + AMP + 2 H(+). The enzyme catalyses 8-oxo-dGDP + H2O = 8-oxo-dGMP + phosphate + H(+). It catalyses the reaction 8-oxo-GDP + H2O = 8-oxo-GMP + phosphate + H(+). Its function is as follows. Catalyzes the hydrolysis of ADP-ribose (ADPR) to AMP and ribose-5-phosphate. Can also hydrolyze ADP-mannose and ADP-glucose, with lower efficiency. Has weaker activity with NAD, GDP-sugars and UDP-sugars. Also catalyzes the conversion of 8-oxo-dGDP to 8-oxo-dGMP, and 8-oxo-GDP to 8-oxo-GMP. Functions in concert with MutT1 to detoxify 8-oxo-dGTP to 8-oxo-dGMP and may play an important role in supporting cellular growth under oxidative stress. The catalytic efficiency is much higher for the hydrolysis of ADPR than 8-oxo-dGTP, suggesting a more relevant biological role in hydrolysis of ADPR. The sequence is that of ADP-ribose pyrophosphatase from Mycobacterium tuberculosis (strain ATCC 25618 / H37Rv).